A 243-amino-acid chain; its full sequence is Transcription factor A, mitochondrial (243 aa).

The transit peptide at 1 to 42 (MALFRGMWSVLKALGRTGVEMCAGCGGRIPSSISLVCIPKCF) directs the protein to the mitochondrion. Residues 49–117 (PKKPMSSYLR…AYKEAVSKYK (69 aa)) constitute a DNA-binding region (HMG box 1). S54, S55, and S60 each carry phosphoserine; by PKA. The residue at position 66 (K66) is an N6-succinyllysine. T121 carries the phosphothreonine modification. Residues 154–218 (PKRPRSAYNI…RYDNEMKSWE (65 aa)) constitute a DNA-binding region (HMG box 2). A Phosphoserine; by PKA modification is found at S159. Phosphoserine is present on S192.

Monomer; binds DNA as a monomer. Homodimer. Component of the mitochondrial transcription initiation complex, composed at least of TFB2M, TFAM and POLRMT. In this complex TFAM recruits POLRMT to the promoter whereas TFB2M induces structural changes in POLRMT to enable promoter opening and trapping of the DNA non-template strand. Upon metabolic stress, forms a complex composed of FOXO3, SIRT3, TFAM and POLRMT. Interacts with TFB1M and TFB2M. Interacts with CLPX; this enhances DNA-binding. Post-translationally, phosphorylation by PKA within the HMG box 1 impairs DNA binding and promotes degradation by the AAA+ Lon protease. As to expression, the mitochondrial isoform is widely expressed while the nuclear isoform is testis-specific.

The protein localises to the mitochondrion. It localises to the mitochondrion matrix. It is found in the mitochondrion nucleoid. The protein resides in the nucleus. Binds to the mitochondrial light strand promoter and functions in mitochondrial transcription regulation. Component of the mitochondrial transcription initiation complex, composed at least of TFB2M, TFAM and POLRMT that is required for basal transcription of mitochondrial DNA. In this complex, TFAM recruits POLRMT to a specific promoter whereas TFB2M induces structural changes in POLRMT to enable promoter opening and trapping of the DNA non-template strand. Required for accurate and efficient promoter recognition by the mitochondrial RNA polymerase. Promotes transcription initiation from the HSP1 and the light strand promoter by binding immediately upstream of transcriptional start sites. Is able to unwind DNA. Bends the mitochondrial light strand promoter DNA into a U-turn shape via its HMG boxes. Required for maintenance of normal levels of mitochondrial DNA. May play a role in organizing and compacting mitochondrial DNA. In terms of biological role, may also function as a transcriptional activator or may have a structural role in the compaction of nuclear DNA during spermatogenesis. The sequence is that of Transcription factor A, mitochondrial from Mus musculus (Mouse).